We begin with the raw amino-acid sequence, 276 residues long: Omega-amidase NIT2 (276 aa).

Residues 4 to 248 (FRLALIQLQV…ETILYSDIDL (245 aa)) enclose the CN hydrolase domain. S26 is subject to Phosphoserine. Residue E43 is the Proton acceptor of the active site. K68 bears the N6-acetyllysine; alternate mark. At K68 the chain carries N6-succinyllysine; alternate. The active-site Proton donor is the K112. K123 and K130 each carry N6-succinyllysine. C153 functions as the Nucleophile in the catalytic mechanism.

The protein belongs to the carbon-nitrogen hydrolase superfamily. NIT1/NIT2 family. As to quaternary structure, homodimer.

It localises to the cytoplasm. It carries out the reaction a monoamide of a dicarboxylate + H2O = a dicarboxylate + NH4(+). The catalysed reaction is 2-oxoglutaramate + H2O = 2-oxoglutarate + NH4(+). The enzyme catalyses 2-oxosuccinamate + H2O = oxaloacetate + NH4(+). Its function is as follows. Has omega-amidase activity. The role of omega-amidase is to remove potentially toxic intermediates by converting 2-oxoglutaramate and 2-oxosuccinamate to biologically useful 2-oxoglutarate and oxaloacetate, respectively. Can also hydrolyze gamma-monomethyl-alpha-ketoglutarate in vitro. In Mus musculus (Mouse), this protein is Omega-amidase NIT2.